The primary structure comprises 359 residues: Membrane-bound lytic murein transglycosylase C (359 aa).

The first 16 residues, 1–16 (MKKYLALALIAPLLIS), serve as a signal peptide directing secretion. Cysteine 17 carries N-palmitoyl cysteine lipidation. Cysteine 17 carries S-diacylglycerol cysteine lipidation.

It belongs to the transglycosylase Slt family.

The protein localises to the cell outer membrane. It catalyses the reaction Exolytic cleavage of the (1-&gt;4)-beta-glycosidic linkage between N-acetylmuramic acid (MurNAc) and N-acetylglucosamine (GlcNAc) residues in peptidoglycan, from either the reducing or the non-reducing ends of the peptidoglycan chains, with concomitant formation of a 1,6-anhydrobond in the MurNAc residue.. Functionally, murein-degrading enzyme. May play a role in recycling of muropeptides during cell elongation and/or cell division. In Escherichia coli (strain SE11), this protein is Membrane-bound lytic murein transglycosylase C.